The following is a 687-amino-acid chain: Solute carrier organic anion transporter family member 1B2 (687 aa).

The Cytoplasmic segment spans residues 1–28 (MDHTQQSRKAAEAQPSRSKQTRFCDGFK). The chain crosses the membrane as a helical span at residues 29–48 (LFLAALSFSYICKALGGVVM). Residues 49–67 (KSSITQIERRFDIPSSISG) are Extracellular-facing. A helical transmembrane segment spans residues 68-88 (LIDGGFEIGNLLVIVFVSYFG). Topologically, residues 89–94 (SKLHRP) are cytoplasmic. The chain crosses the membrane as a helical span at residues 95 to 119 (KLIGIGCFIMGIGSILTALPHFFMG). Residues 120–165 (YYKYAKENDIGSLGNSTLTCFINQMTSPTGPSPEIVEKGCEKGLKS) are Extracellular-facing. N-linked (GlcNAc...) asparagine glycosylation is present at N134. Residues 166–194 (HMWIYVLMGNMLRGIGETPIVPLGISYLD) traverse the membrane as a helical segment. Topologically, residues 195–213 (DFAKEGHTSMHLGTLHTIA) are cytoplasmic. The helical transmembrane segment at 214–234 (MIGPILGFIMSSVFAKIYVDV) threads the bilayer. At 235-252 (GYVDLNSVRITPNDARWV) the chain is on the extracellular side. Residues 253–277 (GAWWLSFIVNGLLCITSSIPFFFLP) form a helical membrane-spanning segment. The Cytoplasmic portion of the chain corresponds to 278-328 (KIPKRSQEERKNSVSLHAPKTDEEKKHMTNLTKQEEQDPSNMTGFLRSLRS). Positions 286–311 (ERKNSVSLHAPKTDEEKKHMTNLTKQ) are disordered. A phosphoserine mark is found at S290 and S292. The helical transmembrane segment at 329 to 350 (ILTNEIYVIFLILTLLQVSGFI) threads the bilayer. The Extracellular segment spans residues 351–370 (GSFTYLFKFIEQQFGRTASQ). A helical membrane pass occupies residues 371–394 (ANFLLGIITIPTMATAMFLGGYIV). The Cytoplasmic segment spans residues 395 to 398 (KKFK). The chain crosses the membrane as a helical span at residues 399–422 (LTSVGIAKFVFFTSSVAYAFQFLY). Topologically, residues 423–531 (FPLLCENKPF…YKCKTNYYFY (109 aa)) are extracellular. Positions 450 to 507 (DVPLSYCNSDCSCDKNQWEPICGENGVTYISPCLAGCKSFRGDKKPNNTEFYDCSCIS) constitute a Kazal-like domain. Cystine bridges form between C456-C486, C462-C482, and C471-C505. N-linked (GlcNAc...) asparagine glycans are attached at residues N496 and N511. Residues 532–554 (IILQVTVSFFTAMGSPSLILILM) traverse the membrane as a helical segment. The Cytoplasmic portion of the chain corresponds to 555-563 (KSVQPELKS). Residues 564 to 589 (LAMGFHSLIIRALGGILAPIYYGAFI) form a helical membrane-spanning segment. At 590–623 (DRTCIKWSVTSCGKRGACRLYNSRLFGFSYLGLN) the chain is on the extracellular side. A helical membrane pass occupies residues 624-641 (LALKTPPLFLYVVLIYFT). Over 642–687 (KRKYKRNDNKTLENGRQFTDEGNPDSVNKNGYYCVPYDEQSNETPL) the chain is Cytoplasmic. T660 is subject to Phosphothreonine. At S667 the chain carries Phosphoserine.

The protein belongs to the organo anion transporter (TC 2.A.60) family. Liver specific. Expression is highest in central perivenous hepatocytes and lowest in the periportal region. Isoform 1 predominates. Not detected in heart, brain, kidney, skeletal muscle, lung, testis or spleen.

Its subcellular location is the basolateral cell membrane. It carries out the reaction estrone 3-sulfate(out) = estrone 3-sulfate(in). It catalyses the reaction taurocholate(out) = taurocholate(in). The enzyme catalyses prostaglandin E2(out) = prostaglandin E2(in). The catalysed reaction is L-thyroxine(out) = L-thyroxine(in). In terms of biological role, mediates the Na(+)-independent uptake of organic anions such as taurochlate, bromosulfophthalein and steroid conjugates (estrone 3-sulfate, 17-beta-glucuronosyl estradiol, dehydroepiandrosterone sulfate). Also transports prostaglandin E2 and L-thyroxine (T4). Shows a pH-sensitive substrate specificity which may be ascribed to the protonation state of the binding site and leads to a stimulation of substrate transport in an acidic microenvironment. Hydrogencarbonate/HCO3(-) acts as the probable counteranion that exchanges for organic anions. The polypeptide is Solute carrier organic anion transporter family member 1B2 (Slco1b2) (Rattus norvegicus (Rat)).